Reading from the N-terminus, the 1392-residue chain is DNA-directed RNA polymerase subunit beta'' (1392 aa).

Residues C224, C295, C302, and C305 each coordinate Zn(2+).

It belongs to the RNA polymerase beta' chain family. RpoC2 subfamily. As to quaternary structure, in plastids the minimal PEP RNA polymerase catalytic core is composed of four subunits: alpha, beta, beta', and beta''. When a (nuclear-encoded) sigma factor is associated with the core the holoenzyme is formed, which can initiate transcription. The cofactor is Zn(2+).

Its subcellular location is the plastid. It is found in the chloroplast. The enzyme catalyses RNA(n) + a ribonucleoside 5'-triphosphate = RNA(n+1) + diphosphate. Its function is as follows. DNA-dependent RNA polymerase catalyzes the transcription of DNA into RNA using the four ribonucleoside triphosphates as substrates. This is DNA-directed RNA polymerase subunit beta'' from Solanum bulbocastanum (Wild potato).